A 198-amino-acid chain; its full sequence is uncharacterized protein (198 aa).

It localises to the plastid. Its subcellular location is the chloroplast. This is an uncharacterized protein from Antithamnion sp. (Red alga).